A 348-amino-acid polypeptide reads, in one-letter code: MNGTEGPNFYVPFSNVTGVVRSPFEQPQYYLAEPWQFSMLAAYMFLLIVLGFPINFLTLYVTVQHKKLRTPLNYILLNLAVADLFMVFGGFTTTLYTSLHGYFVFGPTGCNLEGFFATLGGEIALWSLVVLAIERYVVVCKPMSNFRFGENHAIMGVVFTWIMALACAAPPLVGWSRYIPEGMQCSCGIDYYTLKPEVNNESFVIYMFVVHFTIPMIVIFFCYGQLVFTVKEAAAQQQESATTQKAEKEVTRMVIIMVIFFLICWLPYASVAFYIFTHQGSNFGPIFMTLPAFFAKSSSIYNPVIYIMLNKQFRNCMLTTLCCGKNPLGDDDASATASKTETSQVAPA.

An N-acetylmethionine modification is found at Met-1. At Met-1 to Gln-36 the chain is on the extracellular side. Residues Asn-2 and Asn-15 are each glycosylated (N-linked (GlcNAc...) asparagine). The helical transmembrane segment at Phe-37–Val-61 threads the bilayer. Residues Thr-62 to Asn-73 are Cytoplasmic-facing. A helical membrane pass occupies residues Tyr-74–Tyr-96. Residues Thr-97 to Cys-110 lie on the Extracellular side of the membrane. Cys-110 and Cys-187 are oxidised to a cystine. A helical transmembrane segment spans residues Asn-111–Ile-133. The 'Ionic lock' involved in activated form stabilization motif lies at Glu-134–Tyr-136. Residues Glu-134–His-152 are Cytoplasmic-facing. Residues Ala-153–Val-173 traverse the membrane as a helical segment. Topologically, residues Gly-174 to Ser-202 are extracellular. Position 201 (Glu-201) interacts with Zn(2+). Residues Phe-203 to Gly-224 traverse the membrane as a helical segment. Residues Gln-225–Arg-252 lie on the Cytoplasmic side of the membrane. A helical membrane pass occupies residues Met-253–Tyr-274. The Extracellular segment spans residues Ile-275–Ile-286. Gln-279 is a Zn(2+) binding site. A helical transmembrane segment spans residues Phe-287 to Met-308. Lys-296 is modified (N6-(retinylidene)lysine). At Leu-309–Ala-348 the chain is on the cytoplasmic side. Residues Cys-322 and Cys-323 are each lipidated (S-palmitoyl cysteine). Residues Asp-330–Ala-348 are interaction with SAG. Ser-334 bears the Phosphoserine mark. The residue at position 336 (Thr-336) is a Phosphothreonine. Position 338 is a phosphoserine (Ser-338). Phosphothreonine occurs at positions 340 and 342. Phosphoserine is present on Ser-343.

Belongs to the G-protein coupled receptor 1 family. Opsin subfamily. As to quaternary structure, homodimer. May form a complex composed of RHO, GRK1 and RCVRN in a Ca(2+)-dependent manner; RCVRN prevents the interaction between GRK1 and RHO. Interacts with GRK1. Interacts (phosphorylated form) with SAG. Interacts with GNAT1. Interacts with GNAT3. SAG and G-proteins compete for a common binding site. Interacts with PRCD; the interaction promotes PRCD stability. Forms a complex with ASAP1 and ARF4. Forms a complex with ASAP1, RAB11A, Rabin8/RAB3IP, ARF4 and RAB11FIP3; the complex regulates Golgi-to-cilia rhodopsin/RHO transport in photoreceptors. In terms of processing, phosphorylated on some or all of the serine and threonine residues present in the C-terminal region. Contains one covalently linked retinal chromophore. Upon light absorption, the covalently bound 11-cis-retinal is converted to all-trans-retinal. After hydrolysis of the Schiff base and release of the covalently bound all-trans-retinal, active rhodopsin is regenerated by binding of a fresh molecule of 11-cis-retinal. Rod-shaped photoreceptor cells in the retina (at protein level).

It is found in the membrane. The protein localises to the cell projection. Its subcellular location is the cilium. It localises to the photoreceptor outer segment. Functionally, photoreceptor required for image-forming vision at low light intensity. Required for photoreceptor cell viability after birth. Light-induced isomerization of 11-cis to all-trans retinal triggers a conformational change that activates signaling via G-proteins. Subsequent receptor phosphorylation mediates displacement of the bound G-protein alpha subunit by the arrestin SAG and terminates signaling. In Mus musculus (Mouse), this protein is Rhodopsin (Rho).